A 453-amino-acid chain; its full sequence is Homogentisate 1,2-dioxygenase (453 aa).

Catalysis depends on His304, which acts as the Proton acceptor. His347 and Glu353 together coordinate Fe cation. Homogentisate contacts are provided by Tyr362 and His383. A Fe cation-binding site is contributed by His383.

The protein belongs to the homogentisate dioxygenase family. As to quaternary structure, hexamer; dimer of trimers. The cofactor is Fe cation.

The enzyme catalyses homogentisate + O2 = 4-maleylacetoacetate + H(+). The protein operates within amino-acid degradation; L-phenylalanine degradation; acetoacetate and fumarate from L-phenylalanine: step 4/6. Involved in the catabolism of homogentisate (2,5-dihydroxyphenylacetate or 2,5-OH-PhAc), a central intermediate in the degradation of phenylalanine and tyrosine. Catalyzes the oxidative ring cleavage of the aromatic ring of homogentisate to yield maleylacetoacetate. The sequence is that of Homogentisate 1,2-dioxygenase from Sinorhizobium fredii (strain NBRC 101917 / NGR234).